A 291-amino-acid chain; its full sequence is Mitochondrial fission factor (291 aa).

Over 1 to 271 (MAEISRIQYE…ENKERAKREM (271 aa)) the chain is Cytoplasmic. The residue at position 89 (Thr89) is a Phosphothreonine. The interval 106–134 (LERPLPTPQSEESRAVGRLKRERSMSENA) is disordered. A phosphoserine mark is found at Ser129, Ser131, and Ser146. A Phosphothreonine modification is found at Thr149. A phosphoserine mark is found at Ser151, Ser178, Ser182, and Ser244. Residues 240–271 (VDAASLRRQIIKLNRRLQLLEEENKERAKREM) adopt a coiled-coil conformation. A helical; Anchor for type IV membrane protein transmembrane segment spans residues 272–289 (VMYSITVAFWLLNSWLWF). At 290–291 (RR) the chain is on the mitochondrial intermembrane side.

This sequence belongs to the Tango11 family. As to quaternary structure, homodimer. Interacts with DNM1L. Interacts with C11orf65/MFI; the interaction inhibits MFF interaction with DNM1L.

It localises to the mitochondrion outer membrane. It is found in the peroxisome. The protein localises to the cytoplasmic vesicle. Its subcellular location is the secretory vesicle. The protein resides in the synaptic vesicle. In terms of biological role, plays a role in mitochondrial and peroxisomal fission. Promotes the recruitment and association of the fission mediator dynamin-related protein 1 (DNM1L) to the mitochondrial surface. May be involved in regulation of synaptic vesicle membrane dynamics by recruitment of DNM1L to clathrin-containing vesicles. The sequence is that of Mitochondrial fission factor (Mff) from Mus musculus (Mouse).